The primary structure comprises 176 residues: Adenine phosphoribosyltransferase (176 aa).

Belongs to the purine/pyrimidine phosphoribosyltransferase family. Homodimer.

The protein localises to the cytoplasm. It carries out the reaction AMP + diphosphate = 5-phospho-alpha-D-ribose 1-diphosphate + adenine. Its pathway is purine metabolism; AMP biosynthesis via salvage pathway; AMP from adenine: step 1/1. In terms of biological role, catalyzes a salvage reaction resulting in the formation of AMP, that is energically less costly than de novo synthesis. This Gluconacetobacter diazotrophicus (strain ATCC 49037 / DSM 5601 / CCUG 37298 / CIP 103539 / LMG 7603 / PAl5) protein is Adenine phosphoribosyltransferase.